Here is a 467-residue protein sequence, read N- to C-terminus: Cysteine--tRNA ligase (467 aa).

Residue Cys29 coordinates Zn(2+). The 'HIGH' region motif lies at Ala31–His41. Residues Cys207, His232, and Glu236 each coordinate Zn(2+). A 'KMSKS' region motif is present at residues Lys263–Ser267. Lys266 contacts ATP. Positions Ile446 to Asn467 are disordered.

This sequence belongs to the class-I aminoacyl-tRNA synthetase family. As to quaternary structure, monomer. It depends on Zn(2+) as a cofactor.

The protein resides in the cytoplasm. It carries out the reaction tRNA(Cys) + L-cysteine + ATP = L-cysteinyl-tRNA(Cys) + AMP + diphosphate. This chain is Cysteine--tRNA ligase, found in Nocardia farcinica (strain IFM 10152).